A 98-amino-acid chain; its full sequence is NADH-ubiquinone oxidoreductase chain 4L (98 aa).

The next 3 membrane-spanning stretches (helical) occupy residues 2-22, 26-46, and 61-81; these read TLVMFNITIAFTLSLLGTLMF, LMSTLLCLEGMMLCLFIMAVI, and IIILVFAACEAAVGLALLAMV.

This sequence belongs to the complex I subunit 4L family. As to quaternary structure, core subunit of respiratory chain NADH dehydrogenase (Complex I) which is composed of 45 different subunits.

Its subcellular location is the mitochondrion inner membrane. It catalyses the reaction a ubiquinone + NADH + 5 H(+)(in) = a ubiquinol + NAD(+) + 4 H(+)(out). Its function is as follows. Core subunit of the mitochondrial membrane respiratory chain NADH dehydrogenase (Complex I) which catalyzes electron transfer from NADH through the respiratory chain, using ubiquinone as an electron acceptor. Part of the enzyme membrane arm which is embedded in the lipid bilayer and involved in proton translocation. This is NADH-ubiquinone oxidoreductase chain 4L (MT-ND4L) from Nyctomys sumichrasti (Sumichrast's vesper rat).